The following is a 700-amino-acid chain: Acyl-coenzyme A oxidase 2 (700 aa).

This sequence belongs to the acyl-CoA oxidase family. As to quaternary structure, heteropentamer composed of five different subunits. It depends on FAD as a cofactor.

The protein resides in the peroxisome. The enzyme catalyses a 2,3-saturated acyl-CoA + O2 = a (2E)-enoyl-CoA + H2O2. It participates in lipid metabolism; peroxisomal fatty acid beta-oxidation. Its function is as follows. Oxidizes strain chain acyl-CoAs with a chain length of 10 to 14 carbons. Also active toward the 2S isomers of acyl-CoA-esters containing a 2-methyl group. The chain is Acyl-coenzyme A oxidase 2 (POX2) from Yarrowia lipolytica (strain CLIB 122 / E 150) (Yeast).